Reading from the N-terminus, the 690-residue chain is Protein arginine N-methyltransferase 7 (690 aa).

SAM-dependent MTase PRMT-type domains are found at residues 14–357 (QNSW…YSLW) and 366–690 (TKSV…QKKL).

This sequence belongs to the class I-like SAM-binding methyltransferase superfamily. Protein arginine N-methyltransferase family. PRMT7 subfamily.

In terms of biological role, essential arginine methyltransferase that can both catalyze the formation of omega-N monomethylarginine (MMA) and symmetrical dimethylarginine (sDMA). Specifically mediates the symmetrical dimethylation of arginine residues in the small nuclear ribonucleoproteins SmD1 and SmD3. The sequence is that of Protein arginine N-methyltransferase 7 (Art7) from Drosophila yakuba (Fruit fly).